We begin with the raw amino-acid sequence, 422 residues long: Putidaredoxin reductase CamA (422 aa).

5 residues coordinate FAD: Ala15, Asp37, Lys50, Val83, and Arg134. 156–165 (GGGYIGLEVA) is a binding site for NAD(+). Residues Asp284 and Val302 each contribute to the FAD site.

The protein belongs to the FAD-dependent oxidoreductase family. Homodimer or monomer. FAD is required as a cofactor.

The enzyme catalyses 2 reduced [2Fe-2S]-[putidaredoxin] + NAD(+) + H(+) = 2 oxidized [2Fe-2S]-[putidaredoxin] + NADH. It functions in the pathway terpene metabolism; (R)-camphor degradation. Its function is as follows. The oxidation of camphor by cytochrome P450-CAM CamC requires the participation of the flavoprotein, putidaredoxin reductase CamA, and the iron-sulfur protein, putidaredoxin CamB, to mediate the transfer of electrons from NADH to P450 for oxygen activation. This chain is Putidaredoxin reductase CamA, found in Pseudomonas putida (Arthrobacter siderocapsulatus).